The chain runs to 420 residues: Glucose-1-phosphate adenylyltransferase (420 aa).

Alpha-D-glucose 1-phosphate is bound by residues Tyr107, Gly172, 187 to 188 (EK), and Ser205.

This sequence belongs to the bacterial/plant glucose-1-phosphate adenylyltransferase family. In terms of assembly, homotetramer.

The enzyme catalyses alpha-D-glucose 1-phosphate + ATP + H(+) = ADP-alpha-D-glucose + diphosphate. It functions in the pathway glycan biosynthesis; glycogen biosynthesis. Involved in the biosynthesis of ADP-glucose, a building block required for the elongation reactions to produce glycogen. Catalyzes the reaction between ATP and alpha-D-glucose 1-phosphate (G1P) to produce pyrophosphate and ADP-Glc. In Rhizobium rhizogenes (strain K84 / ATCC BAA-868) (Agrobacterium radiobacter), this protein is Glucose-1-phosphate adenylyltransferase.